Consider the following 220-residue polypeptide: Nitrile hydratase subunit beta (220 aa).

This sequence belongs to the nitrile hydratase subunit beta family. Heterodimer of an alpha and a beta chain.

The enzyme catalyses an aliphatic primary amide = an aliphatic nitrile + H2O. Functionally, NHase catalyzes the hydration of various nitrile compounds to the corresponding amides. The polypeptide is Nitrile hydratase subunit beta (nthB) (Pseudomonas chlororaphis (Pseudomonas aureofaciens)).